Consider the following 176-residue polypeptide: Oleosin Ara h 14.0101 (176 aa).

Alanine 2 carries the post-translational modification N-acetylalanine; alternate. 2 helical membrane passes run 50 to 80 (IIAVLVGVPTGGTLLLLSGLSLLGTIIGLAI) and 95 to 117 (AVVTIGLAVTGILTAGACGLTGL). A disordered region spans residues 157 to 176 (TKDAGQQIQTKAQDVKRSSS).

This sequence belongs to the oleosin family. Homodimer. Forms oligomers. Expressed in seeds (at protein level). Not expressed in leaves.

It is found in the lipid droplet. It localises to the membrane. May have a structural role to stabilize the lipid body during desiccation of the seed by preventing coalescence of the oil. Probably interacts with both lipid and phospholipid moieties of lipid bodies. May also provide recognition signals for specific lipase anchorage in lipolysis during seedling growth. This Arachis hypogaea (Peanut) protein is Oleosin Ara h 14.0101.